The sequence spans 503 residues: von Willebrand factor A domain-containing protein 1 (503 aa).

A signal peptide spans 1–21; sequence MEVRKALTCVFLTVFLCSGDA. In terms of domain architecture, VWFA spans 36-213; that stretch reads DVLFLLDSSG…IIGEDLRNSI (178 aa). Fibronectin type-III domains lie at 218–324 and 331–423; these read RAER…TVNP and LLSS…VLPA.

Homodimer or homomultimer; disulfide-linked.

The protein localises to the secreted. It is found in the extracellular space. Its subcellular location is the extracellular matrix. It localises to the basement membrane. Its function is as follows. Promotes matrix assembly. Involved in the organization of skeletal muscles and in the formation of neuromuscular junctions. This chain is von Willebrand factor A domain-containing protein 1, found in Danio rerio (Zebrafish).